A 33-amino-acid chain; its full sequence is Mytimycin (33 aa).

The protein localises to the secreted. Has antifungal activity against N.crassa and F.culmorum. This chain is Mytimycin, found in Mytilus edulis (Blue mussel).